Reading from the N-terminus, the 583-residue chain is Proline--tRNA ligase (583 aa).

The protein belongs to the class-II aminoacyl-tRNA synthetase family. ProS type 1 subfamily. As to quaternary structure, homodimer.

It localises to the cytoplasm. The enzyme catalyses tRNA(Pro) + L-proline + ATP = L-prolyl-tRNA(Pro) + AMP + diphosphate. Its function is as follows. Catalyzes the attachment of proline to tRNA(Pro) in a two-step reaction: proline is first activated by ATP to form Pro-AMP and then transferred to the acceptor end of tRNA(Pro). As ProRS can inadvertently accommodate and process non-cognate amino acids such as alanine and cysteine, to avoid such errors it has two additional distinct editing activities against alanine. One activity is designated as 'pretransfer' editing and involves the tRNA(Pro)-independent hydrolysis of activated Ala-AMP. The other activity is designated 'posttransfer' editing and involves deacylation of mischarged Ala-tRNA(Pro). The misacylated Cys-tRNA(Pro) is not edited by ProRS. This Methylococcus capsulatus (strain ATCC 33009 / NCIMB 11132 / Bath) protein is Proline--tRNA ligase.